The primary structure comprises 262 residues: Adenosylcobinamide-GDP ribazoletransferase (262 aa).

The next 7 helical transmembrane spans lie at 37–57, 58–78, 112–132, 139–159, 183–203, 205–225, and 237–257; these read SMPLAGAAIGALAAGTYALCS, MFSFGTPLFLALFLLWLGIWL, VGAFAVLSLACLLSFRWLFLY, IPPALFVAIPLLSRSGAAWLL, AVWALVLAFLALSLLLVFGGV, VWTSAALAVAMALLALGAKPW, and VLGALIEGGETLLWGVVWLLH.

Belongs to the CobS family. Mg(2+) is required as a cofactor.

Its subcellular location is the cell membrane. The catalysed reaction is alpha-ribazole + adenosylcob(III)inamide-GDP = adenosylcob(III)alamin + GMP + H(+). The enzyme catalyses alpha-ribazole 5'-phosphate + adenosylcob(III)inamide-GDP = adenosylcob(III)alamin 5'-phosphate + GMP + H(+). It participates in cofactor biosynthesis; adenosylcobalamin biosynthesis; adenosylcobalamin from cob(II)yrinate a,c-diamide: step 7/7. Functionally, joins adenosylcobinamide-GDP and alpha-ribazole to generate adenosylcobalamin (Ado-cobalamin). Also synthesizes adenosylcobalamin 5'-phosphate from adenosylcobinamide-GDP and alpha-ribazole 5'-phosphate. The sequence is that of Adenosylcobinamide-GDP ribazoletransferase from Geobacillus thermodenitrificans (strain NG80-2).